Here is a 409-residue protein sequence, read N- to C-terminus: tRNA(Met) cytidine acetate ligase (409 aa).

ATP is bound by residues 7–20, glycine 102, asparagine 169, and arginine 194; that span reads VVEY…HLYH.

Belongs to the TmcAL family.

The protein resides in the cytoplasm. It carries out the reaction cytidine(34) in elongator tRNA(Met) + acetate + ATP = N(4)-acetylcytidine(34) in elongator tRNA(Met) + AMP + diphosphate. Functionally, catalyzes the formation of N(4)-acetylcytidine (ac(4)C) at the wobble position of elongator tRNA(Met), using acetate and ATP as substrates. First activates an acetate ion to form acetyladenylate (Ac-AMP) and then transfers the acetyl group to tRNA to form ac(4)C34. In Clostridium botulinum (strain Okra / Type B1), this protein is tRNA(Met) cytidine acetate ligase.